The sequence spans 560 residues: Putative protease Do-like 11, mitochondrial (560 aa).

Residues 1–65 constitute a mitochondrion transit peptide; sequence MFFRPCVHTV…RRSSTSAAER (65 aa). Residues 117-302 form a serine protease region; sequence TEYSKSKPWK…ESRQYSCFGS (186 aa). Catalysis depends on charge relay system residues histidine 150, aspartate 184, and serine 258. Positions 288–384 constitute a PDZ domain; the sequence is ITSVQESRQY…YLVSMKKPGE (97 aa).

It belongs to the peptidase S1C family.

It is found in the mitochondrion membrane. In terms of biological role, putative serine protease. The polypeptide is Putative protease Do-like 11, mitochondrial (DEGP11) (Arabidopsis thaliana (Mouse-ear cress)).